The following is a 528-amino-acid chain: OLD nuclease (528 aa).

The tract at residues M1–G153 is ATPase domain N-terminus. ATP is bound at residue G31–T35. The tract at residues S154–D245 is dimerization domain. The segment at E246–F369 is ATPase domain C-terminus. A toprim domain region spans residues A370 to E528. 4 residues coordinate a divalent metal cation: E377, D381, D431, and D433. A disordered region spans residues R440–Q461. A divalent metal cation-binding residues include S478 and E480. R487 (stabilizes transition state or protonates leaving group) is an active-site residue.

It belongs to the class 1 OLD nuclease family. As to quaternary structure, homodimer. The cofactor is Mg(2+). Mn(2+) is required as a cofactor. Requires Ca(2+) as cofactor.

The catalysed reaction is Exonucleolytic cleavage in the 5'- to 3'-direction to yield nucleoside 5'-phosphates.. Functionally, an exodeoxyribonuclease that degrades linear or supercoiled dsDNA from 5'-3'. Nicks and linearizes circular DNA. Activity is not stimulated by ATP or AMP-PNP, although it has DNA-stimulated ATPase activity. This Thermus scotoductus (strain ATCC 700910 / SA-01) protein is OLD nuclease.